An 82-amino-acid chain; its full sequence is Small ribosomal subunit protein bS16 (82 aa).

Belongs to the bacterial ribosomal protein bS16 family.

The chain is Small ribosomal subunit protein bS16 from Vibrio vulnificus (strain CMCP6).